The primary structure comprises 722 residues: MEPQRKHSTALHTCHPCRRTIPYRIYAVFHTCGIIALMYHHVHSIVNANNTLITCLLLLSDIVLAFMWATTTSLRLNPIHRTEYPEKYAAKPEDFPKLDVFICTADPYKEPPMMVVNTALSVMAYEYPSHKISVYVSDDGGSSLTLFALMEAAKFSKHWLPFCKNNNVQDRSPEVYFSSKSHSSSDEAENLKMMYEDMKSRVEHVVESGKVETAFIACDQFSCVFDLWTDKFTRHDHPTIIMVLQHNETEMMPNLIYVSREKSKVSPHHFKAGALNTLLRVSAVMTNSPIILTLDCDMYSNNPTTPLHALCYLSDPKINFDLGFVQFPQKFQGVNKNDIYASELKRPFDINTVGFDGLMGPVHMGTGCFFNRRAFYGPPTTLILPEIETFGPNRIADKPIKAQDILALAHDVAGCNYECNTNWGSKIGFRYGSLVEDYFTGFMLHCEGWRSIFCSPTKAAFYGDSPKCLTDVIGQQIRWSVGLLEVAFSRYNPLTYGIKPLSLLMSLGYCHYAFWPFWCIPLVVYGILPQVALIHGVSVFPKASDPWFWLYIILFLGGYAQDLSDFLLEGGTYRKWWNDQRMWMVRGLSSFFFGFTEFTLKTLNLSTQGYNVTSKSNDDNEQMKRYEQEIFDFGPSSSMFLPITTVAIMNLLAFMRGLYGIFTWGEGPVLELMLASFAVVNCLPIYEAMVLRIDDGKLPKRICFLAGLLSFVLTGSGYFFLK.

2 helical membrane passes run 25 to 45 (IYAV…VHSI) and 51 to 71 (TLIT…WATT). Catalysis depends on residues Asp139 and Asp437. Transmembrane regions (helical) follow at residues 514-534 (FWPF…VALI), 548-568 (FWLY…DFLL), 583-605 (WMVR…TLNL), 635-655 (PSSS…LAFM), 660-680 (GIFT…FAVV), and 702-722 (ICFL…FFLK).

This sequence belongs to the glycosyltransferase 2 family. Plant cellulose synthase-like G subfamily. In terms of tissue distribution, expressed in young seedlings, primarily in the vascular tissue.

It localises to the golgi apparatus membrane. Thought to be a Golgi-localized beta-glycan synthase that polymerize the backbones of noncellulosic polysaccharides (hemicelluloses) of plant cell wall. This Arabidopsis thaliana (Mouse-ear cress) protein is Cellulose synthase-like protein G2 (CSLG2).